The following is a 21-amino-acid chain: Major outer membrane protein (21 aa).

Disulfide bond interactions within and between MOMP molecules and other components form high molecular-weight oligomers.

It localises to the cell outer membrane. Functionally, structural rigidity of the outer membrane of elementary bodies and porin forming, permitting diffusion of solutes through the intracellular reticulate body membrane. This Actinobacillus suis protein is Major outer membrane protein.